An 828-amino-acid polypeptide reads, in one-letter code: Periplasmic nitrate reductase 1 (828 aa).

The tat-type signal signal peptide spans 1-30 (MKMTRRAFVKANAAASAAAVAGITLPASAA). In terms of domain architecture, 4Fe-4S Mo/W bis-MGD-type spans 41-97 (IKWDKAPCRFCGTGCSVLVGTQNGRVVATQGDPEAPVNKGLNCIKGYFLSKIMYGKD). Cys48, Cys51, Cys55, and Cys83 together coordinate [4Fe-4S] cluster. Residues Lys85, Gln152, Asn177, Cys181, 214–221 (WGSNMAEM), 245–249 (STYYH), 264–266 (QTD), Met374, Gln378, Asn484, 510–511 (SD), Lys533, Asp560, and 718–727 (TGRVLEHWHT) contribute to the Mo-bis(molybdopterin guanine dinucleotide) site. Phe794 contacts substrate. Asn802 and Lys819 together coordinate Mo-bis(molybdopterin guanine dinucleotide).

It belongs to the prokaryotic molybdopterin-containing oxidoreductase family. NasA/NapA/NarB subfamily. Component of the periplasmic nitrate reductase NapAB complex composed of NapA and NapB. [4Fe-4S] cluster is required as a cofactor. It depends on Mo-bis(molybdopterin guanine dinucleotide) as a cofactor. In terms of processing, predicted to be exported by the Tat system. The position of the signal peptide cleavage has not been experimentally proven.

It is found in the periplasm. The enzyme catalyses 2 Fe(II)-[cytochrome] + nitrate + 2 H(+) = 2 Fe(III)-[cytochrome] + nitrite + H2O. Its function is as follows. Catalytic subunit of the periplasmic nitrate reductase complex NapAB. Receives electrons from NapB and catalyzes the reduction of nitrate to nitrite. The chain is Periplasmic nitrate reductase 1 from Photobacterium profundum (strain SS9).